The chain runs to 182 residues: ATP-dependent protease subunit HslV (182 aa).

The active site involves Thr12. Na(+)-binding residues include Ala167, Cys170, and Thr173.

This sequence belongs to the peptidase T1B family. HslV subfamily. In terms of assembly, a double ring-shaped homohexamer of HslV is capped on each side by a ring-shaped HslU homohexamer. The assembly of the HslU/HslV complex is dependent on binding of ATP.

Its subcellular location is the cytoplasm. It catalyses the reaction ATP-dependent cleavage of peptide bonds with broad specificity.. Allosterically activated by HslU binding. Functionally, protease subunit of a proteasome-like degradation complex believed to be a general protein degrading machinery. The sequence is that of ATP-dependent protease subunit HslV from Prosthecochloris aestuarii (strain DSM 271 / SK 413).